We begin with the raw amino-acid sequence, 241 residues long: Ribosomal RNA large subunit methyltransferase E (241 aa).

Residues glycine 88, tryptophan 90, aspartate 111, aspartate 127, and aspartate 151 each coordinate S-adenosyl-L-methionine. Lysine 191 acts as the Proton acceptor in catalysis.

This sequence belongs to the class I-like SAM-binding methyltransferase superfamily. RNA methyltransferase RlmE family.

It is found in the cytoplasm. It carries out the reaction uridine(2552) in 23S rRNA + S-adenosyl-L-methionine = 2'-O-methyluridine(2552) in 23S rRNA + S-adenosyl-L-homocysteine + H(+). Its function is as follows. Specifically methylates the uridine in position 2552 of 23S rRNA at the 2'-O position of the ribose in the fully assembled 50S ribosomal subunit. This Bartonella quintana (strain Toulouse) (Rochalimaea quintana) protein is Ribosomal RNA large subunit methyltransferase E.